We begin with the raw amino-acid sequence, 329 residues long: MGNRKKEIALQVNINTQELWEEMLGSKGLTVVDVYQGWCGPCKPMVSLFQKMRIEVGLDRLHFASAEADRLDVLEKYQGKCEPTFLFYTRGELVAVVKGANPTLLQKTILQQLEAEKKVPAEGGEWRAATDEELLGALKWPPHRKDGGEDGDIASSGKTCTLGIIKPDAVAHGKAEEIIMKIQEAGFDILLKEERTLTEAEMQAFYQHRAREEAFERLVHHMCSGPSHLLILTKTEGTEDVVTAWRTFLGPCDPNVARREHPESLRAQYGTEMPFNAVHGSRDREDANRELALLFPSFKFSDKDKEAPPGAEAQTMVGPVEDPCMSERI.

Residues 11–115 enclose the Thioredoxin domain; the sequence is QVNINTQELW…QKTILQQLEA (105 aa). The tract at residues 157–303 is NDK; it reads GKTCTLGIIK…LFPSFKFSDK (147 aa). The segment at 303–329 is disordered; sequence KDKEAPPGAEAQTMVGPVEDPCMSERI.

It belongs to the NDK family. Monomer and homodimer. Expressed in lung airway epithelium (at protein level).

The protein localises to the cytoplasm. The protein resides in the cytoskeleton. Its subcellular location is the cilium axoneme. It is found in the dynein axonemal particle. In terms of biological role, may be a regulator of microtubule physiology. In Mus musculus (Mouse), this protein is Thioredoxin domain-containing protein 6.